Consider the following 24-residue polypeptide: Brevinin-1Bd (24 aa).

An intrachain disulfide couples cysteine 18 to cysteine 24.

In terms of tissue distribution, expressed by the skin glands.

It localises to the secreted. Functionally, antibacterial activity against Gram-positive bacterium S.aureus and Gram-negative bacterium E.coli. Has activity against C.albicans. This Lithobates berlandieri (Rio Grande leopard frog) protein is Brevinin-1Bd.